The primary structure comprises 826 residues: MLWKTALIFLCWGLTSGELQNGLSATPAAPARRTLDFGFVPSGVYDTVAYYEPGAIGILFNMMHAFLFVVQPNPFPEDLVISAAKDKFGAIQSEYQKVIYYELGFVVCAALGLLFTVLLPLVGLLFCLCRCCDNCGGEMHQRQRKNADCLRGLLTTLLLTTTFIITAGVLCAYAANQNLSSQLKGMRRLVKSNLKDLHTFANQTPAQIDYLISRYGTVKEQVLHDLENVGVILGGRIHEELGKEVKPALDATLSMTGTMRDTKDALENVSLTLETLQEGTVKLQANLSVVRNSLRNALNDPVCVDAPAPEICRNIRNSIPKLEIAANYSSLPDVTDQLNKVNDVLKTDLSQIVAKGIASFNDTPAMVTAQTRNIVEGVKVLLDDIGNNITSFSKMLPVHSSLANFTRMISHTHSQIEDIYPQIDQMDFYRWIGCITLCCMIVLILTFNFLGLLCGILGFDRHASPTTRGCVSNTGGNFLMAGVGFSFLFSWVLMGVITALFLAGGNLEKLVCEPFQTRQLFKVLDTPYLVNSAWRNFIPGYLYNDPEMDLTAYSLYSNCKDNRGIYSALHLDRIFNISSFFNTSVYSKDVSRKFEGLKVDLRGIILLESEGKVNLNNFSETGINEIDFAAYLEEVNKGVTRIDLIDFANQLDAQADQLSKGTLQTSLKGHANTIRQIHIQQVVPLEQSMSTLNQSIRLLERTSSDLPLRVEDVLKAVDDAQNLISYNATFVINQETEKYKQNIIGYFKQYIDWIRTSLALEVATCKPLSNIVDTVEILGCGFLLDSMNTFWFGLGCCTLFLLPSIILSVKLAKFYRRMDTEDVYDE.

The next 3 membrane-spanning stretches (helical) occupy residues 50–70, 106–126, and 153–173; these read YYEP…LFVV, VVCA…GLLF, and LLTT…LCAY. Residues asparagine 178, asparagine 268, asparagine 286, asparagine 327, asparagine 388, and asparagine 404 are each glycosylated (N-linked (GlcNAc...) asparagine). 2 helical membrane-spanning segments follow: residues 439-459 and 483-503; these read CMIV…ILGF and VGFS…LFLA. 4 N-linked (GlcNAc...) asparagine glycosylation sites follow: asparagine 576, asparagine 582, asparagine 617, and asparagine 693.

The protein belongs to the prominin family.

The protein localises to the apical cell membrane. It is found in the cell projection. It localises to the microvillus membrane. Its subcellular location is the endoplasmic reticulum. The protein resides in the endoplasmic reticulum-Golgi intermediate compartment. In terms of biological role, may play a role in cell differentiation, proliferation and apoptosis. Binds cholesterol in cholesterol-containing plasma membrane microdomains and may play a role in the organization of the apical plasma membrane in epithelial cells. Involved in regulation of MAPK and Akt signaling pathways. The sequence is that of Prominin-1-A (prom1a) from Danio rerio (Zebrafish).